The primary structure comprises 298 residues: Tyrosine recombinase XerD (298 aa).

The Core-binding (CB) domain occupies 2-87 (KQDLARIEQF…AVRRLFQYLY (86 aa)). One can recognise a Tyr recombinase domain in the interval 108 to 292 (RLPKDLSEAQ…ATERLRQLHQ (185 aa)). Residues Arg-148, Lys-172, His-244, Arg-247, and His-270 contribute to the active site. The O-(3'-phospho-DNA)-tyrosine intermediate role is filled by Tyr-279.

It belongs to the 'phage' integrase family. XerD subfamily. Forms a cyclic heterotetrameric complex composed of two molecules of XerC and two molecules of XerD, in which XerC interacts with XerD via its C-terminal region, XerD interacts with XerC via its C-terminal region and so on.

The protein resides in the cytoplasm. FtsK may regulate the catalytic switch between XerC and XerD in the heterotetrameric complex during the two steps of the recombination process. In terms of biological role, site-specific tyrosine recombinase, which acts by catalyzing the cutting and rejoining of the recombining DNA molecules. Binds cooperatively to specific DNA consensus sequences that are separated from XerC binding sites by a short central region, forming the heterotetrameric XerC-XerD complex that recombines DNA substrates. The complex is essential to convert dimers of the bacterial chromosome into monomers to permit their segregation at cell division. It also contributes to the segregational stability of plasmids. In the complex XerD specifically exchanges the bottom DNA strands. This Escherichia coli O157:H7 protein is Tyrosine recombinase XerD.